A 542-amino-acid chain; its full sequence is Probable myosin-binding protein 6 (542 aa).

An N-terminal signal peptide occupies residues 1-21; the sequence is MYIQLLCFFLFLFLLLQATMS. The chain crosses the membrane as a helical span at residues 39–59; sequence FLIYTVLEWSLIVFLFIDGVI. Residues 219–239 form a disordered region; that stretch reads SFLAPAPSPRVSHNKLSENES. Residues 300-398 enclose the GTD-binding domain; it reads SILNQLKKEV…ELEAEFEVYR (99 aa). Residues 419 to 480 are disordered; the sequence is GNASAYDDCQ…DEEKGSESKE (62 aa). Polar residues predominate over residues 437–456; sequence AVSSSNQQENGENIDQNGQS. Residues 471–480 show a composition bias toward basic and acidic residues; the sequence is DEEKGSESKE.

It is found in the membrane. Functionally, probable membrane-anchored myosin receptors. The sequence is that of Probable myosin-binding protein 6 from Arabidopsis thaliana (Mouse-ear cress).